Here is a 620-residue protein sequence, read N- to C-terminus: 1-deoxy-D-xylulose-5-phosphate synthase (620 aa).

Thiamine diphosphate is bound by residues H80 and 121–123 (GHS). Position 152 (D152) interacts with Mg(2+). Residues 153–154 (GA), N181, Y288, and E370 each bind thiamine diphosphate. A Mg(2+)-binding site is contributed by N181.

This sequence belongs to the transketolase family. DXPS subfamily. As to quaternary structure, homodimer. Mg(2+) is required as a cofactor. Requires thiamine diphosphate as cofactor.

It catalyses the reaction D-glyceraldehyde 3-phosphate + pyruvate + H(+) = 1-deoxy-D-xylulose 5-phosphate + CO2. The protein operates within metabolic intermediate biosynthesis; 1-deoxy-D-xylulose 5-phosphate biosynthesis; 1-deoxy-D-xylulose 5-phosphate from D-glyceraldehyde 3-phosphate and pyruvate: step 1/1. Functionally, catalyzes the acyloin condensation reaction between C atoms 2 and 3 of pyruvate and glyceraldehyde 3-phosphate to yield 1-deoxy-D-xylulose-5-phosphate (DXP). This is 1-deoxy-D-xylulose-5-phosphate synthase from Escherichia coli (strain K12 / MC4100 / BW2952).